We begin with the raw amino-acid sequence, 345 residues long: tRNA dimethylallyltransferase (345 aa).

9 to 16 (GPTASGKS) lines the ATP pocket. 11 to 16 (TASGKS) is a substrate binding site. Interaction with substrate tRNA regions lie at residues 34–37 (DSMQ) and 195–199 (QRMIR).

It belongs to the IPP transferase family. In terms of assembly, monomer. It depends on Mg(2+) as a cofactor.

It catalyses the reaction adenosine(37) in tRNA + dimethylallyl diphosphate = N(6)-dimethylallyladenosine(37) in tRNA + diphosphate. Catalyzes the transfer of a dimethylallyl group onto the adenine at position 37 in tRNAs that read codons beginning with uridine, leading to the formation of N6-(dimethylallyl)adenosine (i(6)A). The chain is tRNA dimethylallyltransferase from Orientia tsutsugamushi (strain Boryong) (Rickettsia tsutsugamushi).